Reading from the N-terminus, the 164-residue chain is HTH-type transcriptional regulator IscR (164 aa).

In terms of domain architecture, HTH rrf2-type spans 2–131 (RLTSKGRYAV…SSISLEELVN (130 aa)). Positions 28-51 (LADISERQGISLSYLEQLFSRLRK) form a DNA-binding region, H-T-H motif. The [2Fe-2S] cluster site is built by Cys-92, Cys-98, and Cys-104. Residues 141-164 (RQDNDKRRAPNGRAQETINVNLRP) form a disordered region. A compositionally biased stretch (polar residues) spans 154–164 (AQETINVNLRP).

It depends on [2Fe-2S] cluster as a cofactor.

Its function is as follows. Regulates the transcription of several operons and genes involved in the biogenesis of Fe-S clusters and Fe-S-containing proteins. The chain is HTH-type transcriptional regulator IscR from Photorhabdus laumondii subsp. laumondii (strain DSM 15139 / CIP 105565 / TT01) (Photorhabdus luminescens subsp. laumondii).